The sequence spans 36 residues: Photosystem II reaction center protein X (36 aa).

A helical membrane pass occupies residues 9-29 (LWSIFWGGVVVALGAAALTAI).

It belongs to the PsbX family. Type 1 subfamily. PSII is composed of 1 copy each of membrane proteins PsbA, PsbB, PsbC, PsbD, PsbE, PsbF, PsbH, PsbI, PsbJ, PsbK, PsbL, PsbM, PsbT, PsbX, Psb30/Ycf12, peripheral proteins PsbO, CyanoQ (PsbQ), PsbU, PsbV and a large number of cofactors. It forms dimeric complexes.

It is found in the cell inner membrane. Functionally, involved in the binding and/or turnover of quinones at the Q(B) site of photosystem II (PSII). PSII is a light-driven water plastoquinone oxidoreductase, using light energy to abstract electrons from H(2)O, generating a proton gradient subsequently used for ATP formation. The polypeptide is Photosystem II reaction center protein X (Gloeobacter violaceus (strain ATCC 29082 / PCC 7421)).